The primary structure comprises 531 residues: MVQGEESSWRMERAALPLNQALAYGVQAHAAAAAAPPTCFLDFQPAAASAAYFGFGELEEALIHGGGAASAGGGVDPGVIIKNDVAQAKSAAGYLAGAGTGRPPTLEIFPSWPMRHQQQLHSGNSQSVGSTGTDSSSAQNTMSQMELVSPASSAPRQEVMMVTTDDYSYKPGLAAAPAAAAPPSFQQHHPLPLQLHGGEGGGDHDKRKHGSTRKDGKLVDAKTERRLAQNREAARKSRLRKKAYVQQLETSRIRLQQVEHELQRARSQGLFVGGCSAAGDMSSGAAMFDMEYARWLDDDTKRLAELRGGLQAHLLDGNLGLIVEECMQHYDELFQLKAALARSDVFHLLTGSWATPAERCFFWMGGFRPSELLKILIPQLDPLTEQQLLGICNLQQSSEQAEEALAQGLHQLHQSLADTVAAGTLNDGAAAPNYMNIMAVALEKLASLENFYQQADNLRHQTLHQMRRILTTRQAARCFLSIGEYYSRLRALSNLWASRPRDNFIGTESLSPTATELQALHHQQQNQFAGF.

Disordered stretches follow at residues 115–154 (RHQQQLHSGNSQSVGSTGTDSSSAQNTMSQMELVSPASSA) and 195–220 (LHGGEGGGDHDKRKHGSTRKDGKLVD). The span at 116-154 (HQQQLHSGNSQSVGSTGTDSSSAQNTMSQMELVSPASSA) shows a compositional bias: polar residues. The bZIP domain occupies 220–264 (DAKTERRLAQNREAARKSRLRKKAYVQQLETSRIRLQQVEHELQR). Positions 222–242 (KTERRLAQNREAARKSRLRKK) are basic motif. A Nuclear localization signal motif is present at residues 224-231 (ERRLAQNR). The tract at residues 248-262 (LETSRIRLQQVEHEL) is leucine-zipper. The DOG1 domain occupies 285–499 (AAMFDMEYAR…RALSNLWASR (215 aa)).

Belongs to the bZIP family. Binds DNA as a dimer. As to expression, expression in meristem/developing ligule regions.

Its subcellular location is the nucleus. Required for the formation of the blade-sheath boundary in leaves. Promotes flowering. This chain is Transcription factor LG2, found in Zea mays (Maize).